The sequence spans 434 residues: Putative nuclease OPG089 (434 aa).

The Mg(2+) site is built by Asp33, Asp74, Glu168, Asp170, Asp196, and Asp198.

The protein belongs to the XPG/RAD2 endonuclease family. FEN1 subfamily. The cofactor is Mg(2+).

Its subcellular location is the virion. Functionally, putative nuclease that seems to be required for double-strand break repair, homologous recombination, and production of full-length viral genomic DNA. The sequence is that of Putative nuclease OPG089 (OPG089) from Vaccinia virus (strain Copenhagen) (VACV).